The primary structure comprises 1349 residues: ABC multidrug transporter G (1349 aa).

The region spanning 51–299 (RQFLGFLKGS…FEDMGFVCPK (249 aa)) is the ABC transporter 1 domain. N-linked (GlcNAc...) asparagine glycosylation occurs at asparagine 144. Transmembrane regions (helical) follow at residues 407–427 (LSLIIKVVSAILQALVCGSLF), 436–456 (SIFLRPGALFFPVLYFLLESM), 492–512 (IPVVLVQVSCFCIILYFMAAL), and 523–543 (WIIVIANTLCFMQMFRAVGAL). Asparagine 549 is a glycosylation site (N-linked (GlcNAc...) asparagine). 2 consecutive transmembrane segments (helical) span residues 550–570 (ASKITGLLSTIFFVYGGYLIP) and 580–600 (WIFYLNPGAYAFEALMANEFV). N-linked (GlcNAc...) asparagine glycosylation occurs at asparagine 649. Residues 659-679 (FGVIIGFWVFFIVLTALGLEL) traverse the membrane as a helical segment. The ABC transporter 2 domain maps to 721–963 (FTWHDLDYHV…VLDYFARHGA (243 aa)). 757 to 764 (GCSGAGKT) is an ATP binding site. Asparagine 994 carries an N-linked (GlcNAc...) asparagine glycan. 6 consecutive transmembrane segments (helical) span residues 1056-1076 (VILHVFAALFSGFTFWKIGDG), 1085-1105 (FAIFNFIFVAPGCINQMQPFF), 1121-1143 (IYHWLAFIGAQTVSEIPYLILCA), 1166-1186 (MYLQMIFYEFLYTSIGQGIAA), 1193-1213 (FAAVMNPVLIGAGLVSFCGVV), and 1226-1246 (WLYYLDPFTYLVGGLLGEVLW). Asparagine 1287 carries N-linked (GlcNAc...) asparagine glycosylation. A helical transmembrane segment spans residues 1318 to 1338 (TGITALFCVSSYAMVFLMMKL).

The protein belongs to the ABC transporter superfamily. ABCG family. PDR (TC 3.A.1.205) subfamily.

It is found in the cell membrane. Its function is as follows. ABC efflux transporter that seems not to be able to transport azoles, nor rhodamine 6G (R-6G), a known substrate for many ABC transporters. This Aspergillus fumigatus (strain ATCC MYA-4609 / CBS 101355 / FGSC A1100 / Af293) (Neosartorya fumigata) protein is ABC multidrug transporter G.